The following is a 152-amino-acid chain: UPF0178 protein YaiI (152 aa).

The protein belongs to the UPF0178 family.

This chain is UPF0178 protein YaiI, found in Escherichia coli O6:K15:H31 (strain 536 / UPEC).